Reading from the N-terminus, the 324-residue chain is Fibronectin type III domain-containing protein 8 (324 aa).

Residues Pro179 to Thr280 enclose the Fibronectin type-III domain.

This chain is Fibronectin type III domain-containing protein 8 (FNDC8), found in Homo sapiens (Human).